The following is a 418-amino-acid chain: Serine/threonine transporter SstT (418 aa).

The next 9 membrane-spanning stretches (helical) occupy residues S16–P36, L45–V65, L83–F103, A142–L162, P192–L212, L218–F238, V289–L309, L317–A337, and V364–T384.

The protein belongs to the dicarboxylate/amino acid:cation symporter (DAACS) (TC 2.A.23) family.

It is found in the cell inner membrane. It carries out the reaction L-serine(in) + Na(+)(in) = L-serine(out) + Na(+)(out). It catalyses the reaction L-threonine(in) + Na(+)(in) = L-threonine(out) + Na(+)(out). Involved in the import of serine and threonine into the cell, with the concomitant import of sodium (symport system). The polypeptide is Serine/threonine transporter SstT (Tolumonas auensis (strain DSM 9187 / NBRC 110442 / TA 4)).